Reading from the N-terminus, the 146-residue chain is Ribonuclease VapC41 (146 aa).

One can recognise a PINc domain in the interval Leu-3–Arg-142. Mg(2+) contacts are provided by Asp-5 and Asp-112.

Belongs to the PINc/VapC protein family. It depends on Mg(2+) as a cofactor.

Functionally, toxic component of a type II toxin-antitoxin (TA) system. An RNase. Its toxic effect is neutralized by coexpression with cognate antitoxin VapB41. This Mycobacterium tuberculosis (strain CDC 1551 / Oshkosh) protein is Ribonuclease VapC41.